The chain runs to 32 residues: Photosystem I reaction center subunit XII (32 aa).

A helical membrane pass occupies residues 9–31; sequence VYVALVSALITSFLAVRLGLALY.

This sequence belongs to the PsaM family.

It is found in the plastid. The protein localises to the chloroplast thylakoid membrane. In Chaetosphaeridium globosum (Charophycean green alga), this protein is Photosystem I reaction center subunit XII.